The primary structure comprises 788 residues: Protein HHLF1 (788 aa).

Disordered stretches follow at residues 1–82 (MAQR…NFWH), 366–385 (TGTAAGTTSPPAASGTETEA), and 609–663 (IHKK…SRLP). Over residues 16 to 25 (RGRGAGGPSG) the composition is skewed to gly residues. Residues 26–56 (VGSSPPSSCVPMGAPSTAGTGASAAATTTPG) are compositionally biased toward low complexity. The segment at 74–248 (SGNNSNFWHG…HGAGEVVRLY (175 aa)) is RNA-binding. The span at 650–659 (LRRDDEDWKP) shows a compositional bias: basic and acidic residues. The segment at 671–788 (LDETFWVLGS…IATHYHYNAQ (118 aa)) is interaction with host EIF2AK2/PKR.

This sequence belongs to the herpesviridae US22 family. Interacts with host EIF2AK2/PKR; this interaction retains EIF2AK2 to the host nucleus and prevents its activation. Interaction (via N-terminus) with host BECN1; this interaction inhibits host autophagy. Interacts with the viral DNA polymerase accessory subunit UL44. Interacts with host HSPA5.

It is found in the virion. The protein localises to the host cytoplasm. It localises to the host nucleus. Functionally, inhibits the establishment of the antiviral state and the integrated stress response (ISR) in the infected cell. Prevents the phosphorylation of the host eukaryotic translation initiation factor eIF-2alpha/EIF2S1 and thus the shutoff of viral and cellular protein synthesis by directly interacting with EIF2AK2/PKR. Prevents stress granule formation in response to eIF-2alpha/EIF2S1 phosphorylation, thereby rescuing viral replication and protein synthesis. Also inhibits host autophagy by interacting with host Beclin-1/BECN1. This is Protein HHLF1 (TRS1) from Homo sapiens (Human).